A 201-amino-acid polypeptide reads, in one-letter code: Large ribosomal subunit protein uL4 (201 aa).

The tract at residues 45–73 (AQKTRAEVTGSGKKPWRQKGTGRARAGSV) is disordered.

This sequence belongs to the universal ribosomal protein uL4 family. Part of the 50S ribosomal subunit.

Its function is as follows. One of the primary rRNA binding proteins, this protein initially binds near the 5'-end of the 23S rRNA. It is important during the early stages of 50S assembly. It makes multiple contacts with different domains of the 23S rRNA in the assembled 50S subunit and ribosome. In terms of biological role, forms part of the polypeptide exit tunnel. This Yersinia pseudotuberculosis serotype O:1b (strain IP 31758) protein is Large ribosomal subunit protein uL4.